The primary structure comprises 190 residues: Peptidyl-tRNA hydrolase (190 aa).

Tyr17 contributes to the tRNA binding site. His22 serves as the catalytic Proton acceptor. Residues Tyr67 and Asn69 each contribute to the tRNA site.

It belongs to the PTH family. In terms of assembly, monomer.

It localises to the cytoplasm. The catalysed reaction is an N-acyl-L-alpha-aminoacyl-tRNA + H2O = an N-acyl-L-amino acid + a tRNA + H(+). In terms of biological role, hydrolyzes ribosome-free peptidyl-tRNAs (with 1 or more amino acids incorporated), which drop off the ribosome during protein synthesis, or as a result of ribosome stalling. Its function is as follows. Catalyzes the release of premature peptidyl moieties from peptidyl-tRNA molecules trapped in stalled 50S ribosomal subunits, and thus maintains levels of free tRNAs and 50S ribosomes. This is Peptidyl-tRNA hydrolase from Moorella thermoacetica (strain ATCC 39073 / JCM 9320).